The sequence spans 322 residues: Gluconeogenesis factor (322 aa).

Residues T13, 217 to 219 (NVM), 263 to 267 (KYAKE), and 300 to 301 (RH) each bind NAD(+).

This sequence belongs to the gluconeogenesis factor family.

It localises to the cytoplasm. Functionally, required for morphogenesis under gluconeogenic growth conditions. The chain is Gluconeogenesis factor from Halalkalibacterium halodurans (strain ATCC BAA-125 / DSM 18197 / FERM 7344 / JCM 9153 / C-125) (Bacillus halodurans).